Here is a 371-residue protein sequence, read N- to C-terminus: Surface protein P12p (371 aa).

The first 20 residues, 1 to 20, serve as a signal peptide directing secretion; the sequence is MHIVSFIIFFFALFFPISIC. 2 consecutive 6-Cys domains span residues 23 to 168 and 169 to 343; these read INGV…LKKN and ILYG…FSNQ. 4 disulfide bridges follow: Cys27-Cys62, Cys76-Cys144, Cys93-Cys142, and Cys173-Cys245. N-linked (GlcNAc...) asparagine glycosylation is present at Asn184. The tract at residues 202–239 is disordered; that stretch reads GNNNNDDDNNDDDNNNDNNNNDNNNNNNNNNNNNNNNN. A compositionally biased stretch (acidic residues) spans 206 to 216; that stretch reads NDDDNNDDDNN. The span at 217–239 shows a compositional bias: low complexity; it reads NDNNNNDNNNNNNNNNNNNNNNN. 2 N-linked (GlcNAc...) asparagine glycosylation sites follow: Asn242 and Asn246. Disulfide bonds link Cys260-Cys323 and Cys271-Cys321.

It localises to the cell surface. The protein resides in the cell membrane. The chain is Surface protein P12p (PFS12P) from Plasmodium falciparum (isolate 3D7).